The following is a 266-amino-acid chain: Transcription factor BIP1 (266 aa).

Residues 1 to 73 (MAMYMPSTAS…DREAQRAIRA (73 aa)) are disordered. Composition is skewed to polar residues over residues 7–22 (STASSTTHIRSPSGTP) and 47–56 (RSVSTLTPSQ). The bZIP domain maps to 54–95 (PSQLARKRANDREAQRAIRARTKEHIERLEREVEELKSKQNR). The segment at 59-81 (RKRANDREAQRAIRARTKEHIER) is basic motif. A compositionally biased stretch (basic and acidic residues) spans 61-73 (RANDREAQRAIRA). Residues 82 to 89 (LEREVEEL) are leucine-zipper.

The protein belongs to the bZIP family. As to expression, expressed in appressoria.

The protein resides in the nucleus. In terms of biological role, transcription factor that is required for infection of plants hosts. Is not implicated in the development of appressoria or the subsequent penetration of host leaves, but is necessary for the initial establishment of the fungus within plant cells by orchestrating the expression of a unique set of early invasion-related genes within appressoria, encoding secreted effectors, enzymes, secondary metabolism-related enzymes, and signaling membrane receptors. Controls the expression of targeted genes by interacting directly with a 5'-TGACTC-3' motif present in their promoters. This chain is Transcription factor BIP1, found in Pyricularia oryzae (strain 70-15 / ATCC MYA-4617 / FGSC 8958) (Rice blast fungus).